We begin with the raw amino-acid sequence, 578 residues long: SWR1 complex bromodomain subunit bdf1 (578 aa).

Positions 1-18 (MSSESRENEVKAETKDEI) are enriched in basic and acidic residues. Disordered regions lie at residues 1–89 (MSSE…PPPQ), 192–254 (DAEQ…RKNN), and 504–578 (ADSS…SESA). Residues 22-36 (GSPQLNGDNNIQSSD) show a composition bias toward polar residues. Composition is skewed to basic and acidic residues over residues 37–52 (GHND…KRDS) and 60–77 (LKQE…EPTV). The Bromo 1 domain occupies 84–190 (GMPPPQQKYC…EVFERQLKQL (107 aa)). A compositionally biased stretch (low complexity) spans 219 to 242 (NSSVSSTSASVAASTAPKAASPAV). Phosphoserine occurs at positions 221, 223, and 224. At Thr225 the chain carries Phosphothreonine. Residues Ser226 and Ser239 each carry the phosphoserine modification. The region spanning 251 to 360 (RKNNSQMRFC…NVFKEKWEAR (110 aa)) is the Bromo 2 domain. One can recognise an NET domain in the interval 430 to 510 (RRDLTKEYGP…KPDADSSEPA (81 aa)). At Ser511 the chain carries Phosphoserine. The span at 526-537 (VLSETEQAEKIR) shows a compositional bias: basic and acidic residues. Over residues 550–563 (TSPTSPESNNAANV) the composition is skewed to polar residues. Residues 566–578 (SESDNESESSESA) are compositionally biased toward acidic residues.

Belongs to the BET family. As to quaternary structure, component of the SWR1 chromatin-remodeling complex.

The protein localises to the nucleus. In terms of biological role, component of the SWR1 complex which mediates the ATP-dependent exchange of histone H2A for the H2A variant HZT1 leading to transcriptional regulation of selected genes by chromatin remodeling. This chain is SWR1 complex bromodomain subunit bdf1 (bdf1), found in Schizosaccharomyces pombe (strain 972 / ATCC 24843) (Fission yeast).